Consider the following 728-residue polypeptide: Phosphoribosylformylglycinamidine synthase subunit PurL (728 aa).

The active site involves H42. The ATP site is built by Y45 and K84. E86 lines the Mg(2+) pocket. Substrate contacts are provided by residues 87-90 (SHNH) and R109. The Proton acceptor role is filled by H88. Position 110 (D110) interacts with Mg(2+). Q237 provides a ligand contact to substrate. D265 is a binding site for Mg(2+). Residue 309-311 (ESQ) participates in substrate binding. ATP contacts are provided by D491 and G528. Residue N529 participates in Mg(2+) binding. S531 provides a ligand contact to substrate.

Belongs to the FGAMS family. In terms of assembly, monomer. Part of the FGAM synthase complex composed of 1 PurL, 1 PurQ and 2 PurS subunits.

Its subcellular location is the cytoplasm. It carries out the reaction N(2)-formyl-N(1)-(5-phospho-beta-D-ribosyl)glycinamide + L-glutamine + ATP + H2O = 2-formamido-N(1)-(5-O-phospho-beta-D-ribosyl)acetamidine + L-glutamate + ADP + phosphate + H(+). Its pathway is purine metabolism; IMP biosynthesis via de novo pathway; 5-amino-1-(5-phospho-D-ribosyl)imidazole from N(2)-formyl-N(1)-(5-phospho-D-ribosyl)glycinamide: step 1/2. Part of the phosphoribosylformylglycinamidine synthase complex involved in the purines biosynthetic pathway. Catalyzes the ATP-dependent conversion of formylglycinamide ribonucleotide (FGAR) and glutamine to yield formylglycinamidine ribonucleotide (FGAM) and glutamate. The FGAM synthase complex is composed of three subunits. PurQ produces an ammonia molecule by converting glutamine to glutamate. PurL transfers the ammonia molecule to FGAR to form FGAM in an ATP-dependent manner. PurS interacts with PurQ and PurL and is thought to assist in the transfer of the ammonia molecule from PurQ to PurL. In Campylobacter jejuni (strain RM1221), this protein is Phosphoribosylformylglycinamidine synthase subunit PurL.